A 1338-amino-acid chain; its full sequence is Aldehyde oxidase (1338 aa).

Residues 5 to 92 (SELLFYVNGR…GAAVTTVEGI (88 aa)) enclose the 2Fe-2S ferredoxin-type domain. The [2Fe-2S] cluster site is built by Cys-44, Cys-49, Cys-52, and Cys-74. Gln-113 lines the Mo-molybdopterin pocket. [2Fe-2S] cluster-binding residues include Cys-114, Cys-117, Cys-149, and Cys-151. Cys-151 contacts Mo-molybdopterin. The region spanning 236–421 (FGSERMMWFS…VSVNIPYSRK (186 aa)) is the FAD-binding PCMH-type domain. Residues 264–271 (VIMGNTSV), Ala-345, Ser-354, His-358, Asp-367, and Leu-411 contribute to the FAD site. Mo-molybdopterin contacts are provided by residues 806–807 (AF) and Met-1047. Ser-1068 is modified (phosphoserine). Residues 1088–1091 (GSVV), Gln-1203, and Leu-1268 each bind Mo-molybdopterin. Glu-1270 acts as the Proton acceptor; for azaheterocycle hydroxylase activity in catalysis.

The protein belongs to the xanthine dehydrogenase family. Homodimer. Requires [2Fe-2S] cluster as cofactor. FAD serves as cofactor. Mo-molybdopterin is required as a cofactor. Abundant in liver, expressed in adipose tissue and at lower levels in lung, skeletal muscle, pancreas. In contrast to mice, no significant gender difference in AOX1 expression level (at protein level).

The protein resides in the cytoplasm. It carries out the reaction an aldehyde + O2 + H2O = a carboxylate + H2O2 + H(+). It catalyses the reaction retinal + O2 + H2O = retinoate + H2O2 + H(+). With respect to regulation, is very potently inhibited by raloxifene. Also inhibited by estradiol, ethinyl estradiol, hydralazine, menadione, isovanillin and thioridazine. Not inhibited by allopurinol, a xanthine dehydrogenase potent inhibitor. Its function is as follows. Oxidase with broad substrate specificity, oxidizing aromatic azaheterocycles, such as N1-methylnicotinamide, N-methylphthalazinium and phthalazine, as well as aldehydes, such as benzaldehyde, retinal, pyridoxal, and vanillin. Plays a key role in the metabolism of xenobiotics and drugs containing aromatic azaheterocyclic substituents. Participates in the bioactivation of prodrugs such as famciclovir, catalyzing the oxidation step from 6-deoxypenciclovir to penciclovir, which is a potent antiviral agent. Is probably involved in the regulation of reactive oxygen species homeostasis. May be a prominent source of superoxide generation via the one-electron reduction of molecular oxygen. May also catalyze nitric oxide (NO) production via the reduction of nitrite to NO with NADH or aldehyde as electron donor. May play a role in adipogenesis. This Homo sapiens (Human) protein is Aldehyde oxidase.